The chain runs to 654 residues: Pentatricopeptide repeat-containing protein At4g19191, mitochondrial (654 aa).

A mitochondrion-targeting transit peptide spans 1 to 65; sequence MSLIHRRLYR…PFVAKACARL (65 aa). PPR repeat units lie at residues 86 to 116, 117 to 151, 152 to 186, 187 to 217, 220 to 254, 255 to 289, 290 to 320, 321 to 355, 356 to 390, 392 to 422, 423 to 457, 458 to 488, and 494 to 524; these read DVFVGTATVDMFVKCNSVDYAAKVFERMPER, DATTWNAMLSGFCQSGHTDKAFSLFREMRLNEITP, DSVTVMTLIQSASFEKSLKLLEAMHAVGIRLGVDV, QVTVANTWISTYGKCGDLDSAKLVFEAIDRG, TVVSWNSMFKAYSVFGEAFDAFGLYCLMLREEFKP, DLSTFINLAASCQNPETLTQGRLIHSHAIHLGTDQ, DIEAINTFISMYSKSEDTCSARLLFDIMTSR, TCVSWTVMISGYAEKGDMDEALALFHAMIKSGEKP, DLVTLLSLISGCGKFGSLETGKWIDARADIYGCKR, NVMICNALIDMYSKCGSIHEARDIFDNTPEK, TVVTWTTMIAGYALNGIFLEALKLFSKMIDLDYKP, NHITFLAVLQACAHSGSLEKGWEYFHIMKQV, and GLDHYSCMVDLLGRKGKLEEALELIRNMSAK. Positions 529–604 are type E motif; the sequence is IWGALLNACK…YPGESVIQVN (76 aa). The segment at 605 to 635 is type E(+) motif; sequence GKNHSFTVGEHGHVENEVIYFTLNGLSLFAK.

The protein belongs to the PPR family. PCMP-E subfamily.

It localises to the mitochondrion. This is Pentatricopeptide repeat-containing protein At4g19191, mitochondrial (PCMP-E1) from Arabidopsis thaliana (Mouse-ear cress).